The following is a 370-amino-acid chain: GTPase Obg (370 aa).

An Obg domain is found at 1–159 (MKFIDEARIE…RMLRLELKVL (159 aa)). The OBG-type G domain occupies 160–334 (ADVGLLGMPN…LCYAIYDYLA (175 aa)). GTP-binding positions include 166-173 (GMPNAGKS), 191-195 (FTTLA), 213-216 (DIPG), 284-287 (NKLD), and 315-317 (SAL). Mg(2+) is bound by residues S173 and T193. The segment at 344–370 (EEEDLATDVRFRDAPPADGGATPGGDA) is disordered.

Belongs to the TRAFAC class OBG-HflX-like GTPase superfamily. OBG GTPase family. As to quaternary structure, monomer. Mg(2+) is required as a cofactor.

Its subcellular location is the cytoplasm. An essential GTPase which binds GTP, GDP and possibly (p)ppGpp with moderate affinity, with high nucleotide exchange rates and a fairly low GTP hydrolysis rate. Plays a role in control of the cell cycle, stress response, ribosome biogenesis and in those bacteria that undergo differentiation, in morphogenesis control. The polypeptide is GTPase Obg (Burkholderia ambifaria (strain MC40-6)).